A 492-amino-acid polypeptide reads, in one-letter code: Aerolysin-4 (492 aa).

Residues M1–A23 form the signal peptide. 2 cysteine pairs are disulfide-bonded: C42–C98 and C182–C187. An interaction with host N-linked glycan region spans residues W68 to Y84. The part of the transmembrane beta-barrel after proteolytic activation of the toxin and insertion into the host membrane stretch occupies residues Y256–W288. The tract at residues R346–H355 is interaction with glycans from host GPI-anchor. A propeptide spanning residues A446 to Q492 is cleaved from the precursor.

This sequence belongs to the aerolysin family. As to quaternary structure, homodimer in solution; homoheptamer in the host membrane. After binding to GPI-anchored proteins in target membranes and proteolytic removal of the C-terminal propeptide, the protein assembles into a heptameric pre-pore complex. A further conformation change leads to insertion into the host membrane. Proteolytic cleavage and subsequent release of the propeptide trigger a major conformation change, leading to the formation of a heptameric pre-pore that then inserts into the host membrane.

The protein resides in the secreted. The protein localises to the host cell membrane. Functionally, secreted, cytolytic toxin that forms pores in host membranes after proteolytic removal of a C-terminal propeptide, leading to destruction of the membrane permeability barrier and cell death. The pores are formed by transmembrane beta-strands and are approximately 3 nm in diameter. The polypeptide is Aerolysin-4 (ahh4) (Aeromonas hydrophila).